The sequence spans 289 residues: WUSCHEL-related homeobox 1 (289 aa).

The segment covering 1-11 (MDHMQQQQRQQ) has biased composition (low complexity). The disordered stretch occupies residues 1 to 34 (MDHMQQQQRQQVGGGGGEEVAGRGGVPVCRPSGT). Over residues 12–25 (VGGGGGEEVAGRGG) the composition is skewed to gly residues. The segment at residues 31–96 (PSGTRWTPTT…NHKARERQKK (66 aa)) is a DNA-binding region (homeobox; WUS-type).

It belongs to the WUS homeobox family. Interacts with TPR1, TPR2 and TPR3. Expressed in young leaf primordia. Expressed in branch an floral meristems. Transiently expressed in the shoot apex.

It is found in the nucleus. In terms of biological role, transcription repressor required for the formation and development of tiller buds and panicles. Required for tiller formation and female sterility. Required for the early developmental stages of axillary meristem formation. Plays a role in maintaining the axillary premeristem zone and in promoting the formation of the axillary meristem by promoting OSH1 expression. Does not seem to be involved in maintenance of the shoot apical meristem (SAM). The chain is WUSCHEL-related homeobox 1 from Oryza sativa subsp. japonica (Rice).